Here is a 154-residue protein sequence, read N- to C-terminus: Aspartate carbamoyltransferase regulatory chain (154 aa).

Positions 109, 114, 138, and 141 each coordinate Zn(2+).

The protein belongs to the PyrI family. As to quaternary structure, contains catalytic and regulatory chains. Requires Zn(2+) as cofactor.

Functionally, involved in allosteric regulation of aspartate carbamoyltransferase. In Aeromonas salmonicida (strain A449), this protein is Aspartate carbamoyltransferase regulatory chain.